Consider the following 294-residue polypeptide: Elongation factor Ts (294 aa).

The tract at residues 80-83 is involved in Mg(2+) ion dislocation from EF-Tu; it reads TDFV.

It belongs to the EF-Ts family.

It localises to the cytoplasm. Its function is as follows. Associates with the EF-Tu.GDP complex and induces the exchange of GDP to GTP. It remains bound to the aminoacyl-tRNA.EF-Tu.GTP complex up to the GTP hydrolysis stage on the ribosome. In Listeria monocytogenes serovar 1/2a (strain ATCC BAA-679 / EGD-e), this protein is Elongation factor Ts.